The sequence spans 188 residues: dCTP deaminase (188 aa).

Residue 109–114 (KSTYAR) coordinates dCTP. Glutamate 135 serves as the catalytic Proton donor/acceptor. 3 residues coordinate dCTP: glutamine 154, tyrosine 168, and glutamine 178.

Belongs to the dCTP deaminase family. Homotrimer.

It catalyses the reaction dCTP + H2O + H(+) = dUTP + NH4(+). It functions in the pathway pyrimidine metabolism; dUMP biosynthesis; dUMP from dCTP (dUTP route): step 1/2. In terms of biological role, catalyzes the deamination of dCTP to dUTP. The polypeptide is dCTP deaminase (Helicobacter pylori (strain P12)).